Consider the following 204-residue polypeptide: Methylthioribulose-1-phosphate dehydratase (204 aa).

Zn(2+)-binding residues include His94 and His96.

This sequence belongs to the aldolase class II family. MtnB subfamily. Requires Zn(2+) as cofactor.

It catalyses the reaction 5-(methylsulfanyl)-D-ribulose 1-phosphate = 5-methylsulfanyl-2,3-dioxopentyl phosphate + H2O. Its pathway is amino-acid biosynthesis; L-methionine biosynthesis via salvage pathway; L-methionine from S-methyl-5-thio-alpha-D-ribose 1-phosphate: step 2/6. In terms of biological role, catalyzes the dehydration of methylthioribulose-1-phosphate (MTRu-1-P) into 2,3-diketo-5-methylthiopentyl-1-phosphate (DK-MTP-1-P). This Pseudomonas syringae pv. syringae (strain B728a) protein is Methylthioribulose-1-phosphate dehydratase.